Here is a 359-residue protein sequence, read N- to C-terminus: Biotin synthase (359 aa).

Positions 1–22 (MQSTPLNFVPNAAKAPVTPGQA) are disordered. A Radical SAM core domain is found at 58 to 285 (NAVQLSTLLS…KAMVRLSAGR (228 aa)). C73, C77, and C80 together coordinate [4Fe-4S] cluster. Positions 117, 148, 208, and 280 each coordinate [2Fe-2S] cluster.

This sequence belongs to the radical SAM superfamily. Biotin synthase family. As to quaternary structure, homodimer. [4Fe-4S] cluster is required as a cofactor. [2Fe-2S] cluster serves as cofactor.

It carries out the reaction (4R,5S)-dethiobiotin + (sulfur carrier)-SH + 2 reduced [2Fe-2S]-[ferredoxin] + 2 S-adenosyl-L-methionine = (sulfur carrier)-H + biotin + 2 5'-deoxyadenosine + 2 L-methionine + 2 oxidized [2Fe-2S]-[ferredoxin]. It functions in the pathway cofactor biosynthesis; biotin biosynthesis; biotin from 7,8-diaminononanoate: step 2/2. Catalyzes the conversion of dethiobiotin (DTB) to biotin by the insertion of a sulfur atom into dethiobiotin via a radical-based mechanism. The sequence is that of Biotin synthase from Ralstonia pickettii (strain 12J).